The primary structure comprises 480 residues: MFS-type transporter oryF (480 aa).

Positions 1–10 are enriched in basic and acidic residues; the sequence is MAEEVNERTR. The interval 1–24 is disordered; the sequence is MAEEVNERTRLLSQSDDPSPSLEE. Residues 11 to 22 are compositionally biased toward low complexity; that stretch reads LLSQSDDPSPSL. 12 consecutive transmembrane segments (helical) span residues 41 to 61, 81 to 101, 107 to 127, 138 to 158, 170 to 190, 197 to 217, 264 to 284, 308 to 328, 351 to 371, 378 to 398, 415 to 435, and 443 to 463; these read LCIA…AIIV, AFVS…GPLS, ISLL…CAFA, FITG…IGDL, LYTL…AYIV, AIFA…LCTL, FLGT…LFGL, ALNY…TGSL, ILML…GWSA, IMPN…YQCI, GALT…APLI, and WGSS…PILL.

This sequence belongs to the major facilitator superfamily.

The protein resides in the membrane. Functionally, MFS-type transporter; part of the gene cluster that mediates the biosynthesis of oryzines, natural products with an unusual maleidride backbone. The polypeptide is MFS-type transporter oryF (Aspergillus oryzae (strain ATCC 42149 / RIB 40) (Yellow koji mold)).